A 259-amino-acid polypeptide reads, in one-letter code: MIDKKKVNRNFSKGAKTYDEYALIQRHMADKLGIFIEDSEEVFNILEIGCGTGIFSEKILNKFPNSNIDFLDISHDMIKNVKDKIGSKENLNFIVEDIEKYQPQKKYDLIFSNATFQWIQNKKGLFDHLDSFLKPGGLILFSTFGKDTYFELRESLKSIDPDLEYSQNFISLEDLKKVLDDKYKILAAEEERIKENYHCVMDFLKMIKGIGANSALSNSKPFTRDKFNRLEDEYRKNYCSGDSIEVTNHLIYMILGKNY.

It belongs to the methyltransferase superfamily.

The catalysed reaction is malonyl-[ACP] + S-adenosyl-L-methionine = malonyl-[ACP] methyl ester + S-adenosyl-L-homocysteine. It functions in the pathway cofactor biosynthesis; biotin biosynthesis. Functionally, converts the free carboxyl group of a malonyl-thioester to its methyl ester by transfer of a methyl group from S-adenosyl-L-methionine (SAM). It allows to synthesize pimeloyl-ACP via the fatty acid synthetic pathway. The sequence is that of Malonyl-[acyl-carrier protein] O-methyltransferase 2 from Ilyobacter polytropus (strain ATCC 51220 / DSM 2926 / LMG 16218 / CuHBu1).